The following is a 934-amino-acid chain: Complement component C6 (934 aa).

Residues 1–21 (MARRSVLYFILLNALINKGQA) form the signal peptide. Disulfide bonds link cysteine 22–cysteine 61, cysteine 24–cysteine 65, cysteine 35–cysteine 73, cysteine 39–cysteine 78, cysteine 82–cysteine 117, cysteine 93–cysteine 127, cysteine 96–cysteine 133, cysteine 140–cysteine 151, cysteine 146–cysteine 164, cysteine 158–cysteine 173, and cysteine 180–cysteine 218. TSP type-1 domains lie at 22–79 (CFCD…QRCP) and 81–134 (NCLL…KLCK). A glycan (C-linked (Man) tryptophan) is linked at tryptophan 29. Tryptophan 32 carries C-linked (Man) tryptophan; partial glycosylation. O-linked (Fuc...) threonine glycosylation occurs at threonine 38. Tryptophan 90 carries C-linked (Man) tryptophan; partial glycosylation. The LDL-receptor class A domain occupies 138 to 175 (ADCKNKFRCDSGRCIARKLECNGENDCGDNSDERDCGR). Ca(2+) is bound by residues leucine 156, asparagine 159, glutamate 161, aspartate 163, aspartate 169, and glutamate 170. One can recognise an MACPF domain in the interval 176–522 (TKAVCTRKYN…EYAAKFDPCQ (347 aa)). Residues 278–290 (SFSVPIFYSSKRS) form a beta stranded membrane-spanning segment. Asparagine 324 is a glycosylation site (N-linked (GlcNAc...) asparagine). Residue threonine 392 is glycosylated (O-linked (Fuc...) threonine). 16 cysteine pairs are disulfide-bonded: cysteine 399–cysteine 420, cysteine 499–cysteine 623, cysteine 521–cysteine 570, cysteine 523–cysteine 539, cysteine 526–cysteine 541, cysteine 543–cysteine 552, cysteine 577–cysteine 611, cysteine 589–cysteine 601, cysteine 644–cysteine 686, cysteine 672–cysteine 699, cysteine 704–cysteine 746, cysteine 732–cysteine 761, cysteine 773–cysteine 823, cysteine 784–cysteine 801, cysteine 786–cysteine 837, and cysteine 793–cysteine 816. The beta stranded transmembrane segment at 402–415 (IETKKRVLFAKKTK) threads the bilayer. Residues 523-553 (CAPCPNNGRPTLSGTECLCVCQSGTYGENCE) form the EGF-like domain. One can recognise a TSP type-1 3 domain in the interval 565 to 612 (DGQWGCWSSWSTCDATYKRSRTRECNNPAPQRGGKRCEGEKRQEEDCT). 3 C-linked (Man) tryptophan; partial glycosylation sites follow: tryptophan 568, tryptophan 571, and tryptophan 574. 2 CCP regions span residues 611–688 (CTFS…RCLP) and 689–765 (DGTW…EKDT). Sushi domains follow at residues 642–701 (SGCP…ECQR) and 702–763 (TECI…TCEK). The C5b-binding domain stretch occupies residues 642–934 (SGCPQPVPPE…EILHPGKCLA (293 aa)). The factor I module (FIM) 1 stretch occupies residues 766-840 (LTKLKGHCQL…FLHIGSCQDG (75 aa)). Positions 780-839 (SGSECICMSPEEDCSHHSEDLCVFDTDSNDYFTSPACKFLAEKCLNNQQLHFLHIGSCQD) constitute a Kazal-like 1 domain. The N-linked (GlcNAc...) asparagine glycan is linked to asparagine 855. Residues 858-934 (KKESCGYDTC…EILHPGKCLA (77 aa)) are factor I module (FIM) 2. 5 disulfides stabilise this stretch: cysteine 862–cysteine 873, cysteine 867–cysteine 919, cysteine 880–cysteine 897, cysteine 882–cysteine 932, and cysteine 888–cysteine 912. One can recognise a Kazal-like 2 domain in the interval 876–934 (STSKCVCLLPPQCFKGGNQLYCVKMGSSTSEKTLNICEVGTIRCANRKMEILHPGKCLA).

This sequence belongs to the complement C6/C7/C8/C9 family. Component of the membrane attack complex (MAC), composed of complement C5b, C6, C7, C8A, C8B, C8G and multiple copies of the pore-forming subunit C9. In terms of processing, all cysteine residues are assumed to be cross-linked to one another. Individual modules containing an even number of conserved cysteine residues are supposed to have disulfide linkages only within the same module.

The protein resides in the secreted. It localises to the target cell membrane. Its activity is regulated as follows. Membrane attack complex (MAC) assembly is inhibited by CD59, thereby protecting self-cells from damage during complement activation. MAC assembly is also inhibited by clusterin (CLU) chaperones that inhibit polymerization of C9. Its function is as follows. Component of the membrane attack complex (MAC), a multiprotein complex activated by the complement cascade, which inserts into a target cell membrane and forms a pore, leading to target cell membrane rupture and cell lysis. The MAC is initiated by proteolytic cleavage of C5 into complement C5b in response to the classical, alternative, lectin and GZMK complement pathways. The complement pathways consist in a cascade of proteins that leads to phagocytosis and breakdown of pathogens and signaling that strengthens the adaptive immune system. Together with component C5b, involved in MAC complex assembly: complement C5b and C6 associate with the outer leaflet of target cell membrane, reducing the energy for membrane bending. The protein is Complement component C6 of Homo sapiens (Human).